We begin with the raw amino-acid sequence, 70 residues long: Small, acid-soluble spore protein 1 (70 aa).

This sequence belongs to the alpha/beta-type SASP family.

In terms of biological role, SASP are bound to spore DNA. They are double-stranded DNA-binding proteins that cause DNA to change to an a-like conformation. They protect the DNA backbone from chemical and enzymatic cleavage and are thus involved in dormant spore's high resistance to UV light. The sequence is that of Small, acid-soluble spore protein 1 (sasP-1) from Geobacillus stearothermophilus (Bacillus stearothermophilus).